Consider the following 244-residue polypeptide: Protein DCG1 (244 aa).

It belongs to the HyuE racemase family.

This is Protein DCG1 (DCG1) from Saccharomyces cerevisiae (strain ATCC 204508 / S288c) (Baker's yeast).